The following is a 300-amino-acid chain: Endonuclease III-like protein 1 (300 aa).

Residues 1–19 (MNSGVRMVTRSRSRATRIA) constitute a mitochondrion transit peptide. Positions 1-53 (MNSGVRMVTRSRSRATRIASEGCREELAPREAAAEGRKSHRPVRHPRRTQKTH) are disordered. Residues 22–37 (GCREELAPREAAAEGR) show a composition bias toward basic and acidic residues. Basic residues predominate over residues 38–51 (KSHRPVRHPRRTQK). The HhH domain maps to 187 to 211 (RYEGDIPASVAELVALPGVGPKMAH). Lys-208 functions as the Nucleophile; for N-glycosylase activity in the catalytic mechanism. 4 residues coordinate [4Fe-4S] cluster: Cys-278, Cys-285, Cys-288, and Cys-294.

The protein belongs to the Nth/MutY family. In terms of assembly, interacts with YBX1. Interacts with ERCC5/XPG; the interaction stimulates NTHL1 activity and NTHL1 binding to its DNA substrate. [4Fe-4S] cluster serves as cofactor. In terms of processing, ubiquitinated by TRIM26; leading to proteasomal degradation. In terms of tissue distribution, widely expressed.

The protein resides in the nucleus. It localises to the mitochondrion. The catalysed reaction is 2'-deoxyribonucleotide-(2'-deoxyribose 5'-phosphate)-2'-deoxyribonucleotide-DNA = a 3'-end 2'-deoxyribonucleotide-(2,3-dehydro-2,3-deoxyribose 5'-phosphate)-DNA + a 5'-end 5'-phospho-2'-deoxyribonucleoside-DNA + H(+). Bifunctional DNA N-glycosylase with associated apurinic/apyrimidinic (AP) lyase function that catalyzes the first step in base excision repair (BER), the primary repair pathway for the repair of oxidative DNA damage. The DNA N-glycosylase activity releases the damaged DNA base from DNA by cleaving the N-glycosidic bond, leaving an AP site. The AP lyase activity cleaves the phosphodiester bond 3' to the AP site by a beta-elimination. Primarily recognizes and repairs oxidative base damage of pyrimidines. The protein is Endonuclease III-like protein 1 (Nthl1) of Mus musculus (Mouse).